Here is a 249-residue protein sequence, read N- to C-terminus: Orotidine 5'-phosphate decarboxylase (249 aa).

Substrate contacts are provided by residues Asp-21, Lys-43, Asp-72–Thr-81, Thr-128, Arg-193, Gln-204, Gly-224, and Arg-225. Residue Lys-74 is the Proton donor of the active site.

The protein belongs to the OMP decarboxylase family. Type 1 subfamily. In terms of assembly, homodimer.

The enzyme catalyses orotidine 5'-phosphate + H(+) = UMP + CO2. It functions in the pathway pyrimidine metabolism; UMP biosynthesis via de novo pathway; UMP from orotate: step 2/2. Its function is as follows. Catalyzes the decarboxylation of orotidine 5'-monophosphate (OMP) to uridine 5'-monophosphate (UMP). The sequence is that of Orotidine 5'-phosphate decarboxylase from Desulfosudis oleivorans (strain DSM 6200 / JCM 39069 / Hxd3) (Desulfococcus oleovorans).